Consider the following 587-residue polypeptide: 2-succinyl-5-enolpyruvyl-6-hydroxy-3-cyclohexene-1-carboxylate synthase (587 aa).

It belongs to the TPP enzyme family. MenD subfamily. In terms of assembly, homodimer. It depends on Mg(2+) as a cofactor. The cofactor is Mn(2+). Thiamine diphosphate serves as cofactor.

It carries out the reaction isochorismate + 2-oxoglutarate + H(+) = 5-enolpyruvoyl-6-hydroxy-2-succinyl-cyclohex-3-ene-1-carboxylate + CO2. It participates in quinol/quinone metabolism; 1,4-dihydroxy-2-naphthoate biosynthesis; 1,4-dihydroxy-2-naphthoate from chorismate: step 2/7. Its pathway is cofactor biosynthesis; phylloquinone biosynthesis. Its function is as follows. Catalyzes the thiamine diphosphate-dependent decarboxylation of 2-oxoglutarate and the subsequent addition of the resulting succinic semialdehyde-thiamine pyrophosphate anion to isochorismate to yield 2-succinyl-5-enolpyruvyl-6-hydroxy-3-cyclohexene-1-carboxylate (SEPHCHC). The protein is 2-succinyl-5-enolpyruvyl-6-hydroxy-3-cyclohexene-1-carboxylate synthase of Prochlorococcus marinus (strain MIT 9301).